A 488-amino-acid chain; its full sequence is Envelope glycoprotein gp62 (488 aa).

An N-terminal signal peptide occupies residues 1–20 (MGKFLATLILFFQFCPLILG). Topologically, residues 21 to 442 (DYSPSCCTLT…LGLSQWAREA (422 aa)) are extracellular. N-linked (GlcNAc...) asparagine; by host glycans are attached at residues asparagine 140 and asparagine 222. The short motif at 225-228 (CIVC) is the CXXC element. 3 disulfides stabilise this stretch: cysteine 225/cysteine 228, cysteine 225/cysteine 401, and cysteine 393/cysteine 400. Asparagine 244 and asparagine 272 each carry an N-linked (GlcNAc...) asparagine; by host glycan. Residues 313-333 (AVPVAVWLVSALAMGAGVAGG) form a fusion peptide region. The segment at 327–339 (GAGVAGGITGSMS) is gly-rich. Coiled coils occupy residues 340–385 (LASG…LDLL) and 397–429 (QEQCCFLNITNSHVSILQERPPLENRVLTGWGL). The segment at 376 to 392 (AQNRRGLDLLFWEQGGL) is immunosuppression. The CX6CC signature appears at 393–401 (CKALQEQCC). A glycan (N-linked (GlcNAc...) asparagine; by host) is linked at asparagine 404. The chain crosses the membrane as a helical span at residues 443–463 (LQTGITLVALLLLVILAGPCI). A lipid anchor (S-palmitoyl cysteine; by host) is attached at cysteine 462. The Cytoplasmic portion of the chain corresponds to 464–488 (LRQLRHLPSRVRYPHYSLINPESSL).

The mature envelope protein (Env) consists of a trimer of SU-TM heterodimers attached by a labile interchain disulfide bond. Specific enzymatic cleavages in vivo yield mature proteins. Envelope glycoproteins are synthesized as an inactive precursor that is N-glycosylated and processed likely by host cell furin or by a furin-like protease in the Golgi to yield the mature SU and TM proteins. The cleavage site between SU and TM requires the minimal sequence [KR]-X-[KR]-R. Post-translationally, the CXXC motif is highly conserved across a broad range of retroviral envelope proteins. It is thought to participate in the formation of a labile disulfide bond possibly with the CX6CC motif present in the transmembrane protein. Isomerization of the intersubunit disulfide bond to an SU intrachain disulfide bond is thought to occur upon receptor recognition in order to allow membrane fusion. In terms of processing, the transmembrane protein is palmitoylated.

The protein localises to the virion membrane. It is found in the host cell membrane. In terms of biological role, the surface protein (SU) attaches the virus to the host cell by binding to its receptor. This interaction triggers the refolding of the transmembrane protein (TM) and is thought to activate its fusogenic potential by unmasking its fusion peptide. Fusion occurs at the host cell plasma membrane. Its function is as follows. The transmembrane protein (TM) acts as a class I viral fusion protein. Under the current model, the protein has at least 3 conformational states: pre-fusion native state, pre-hairpin intermediate state, and post-fusion hairpin state. During viral and target cell membrane fusion, the coiled coil regions (heptad repeats) assume a trimer-of-hairpins structure, positioning the fusion peptide in close proximity to the C-terminal region of the ectodomain. The formation of this structure appears to drive apposition and subsequent fusion of viral and target cell membranes. Membranes fusion leads to delivery of the nucleocapsid into the cytoplasm. The chain is Envelope glycoprotein gp62 (env) from Human T-cell leukemia virus 1 (strain Japan MT-2 subtype A) (HTLV-1).